Reading from the N-terminus, the 342-residue chain is Sideroflexin-5 (342 aa).

Low complexity predominate over residues 1–24 (MADTATTASAASAAASASNASSDA). Positions 1–29 (MADTATTASAASAAASASNASSDAPPFQL) are disordered. 4 helical membrane-spanning segments follow: residues 105–125 (IFMP…VVGL), 165–185 (FIQG…GLNV), 256–276 (LTRV…MSML), and 289–309 (LLPV…PLAI).

This sequence belongs to the sideroflexin family. As to expression, specifically expressed in the brain.

Its subcellular location is the mitochondrion inner membrane. The catalysed reaction is citrate(in) = citrate(out). In terms of biological role, mitochondrial amino-acid transporter. Transports citrate. Does not act as a serine transporter: not able to mediate transport of serine into mitochondria. In brown adipose tissue, plays a role in the regulation of UCP1-dependent thermogenesis probably by supporting mitochondrial glycerol-3-phosphate utilization. The protein is Sideroflexin-5 of Rattus norvegicus (Rat).